The chain runs to 528 residues: Tyrosine--tRNA ligase, cytoplasmic (528 aa).

An N-acetylmethionine modification is found at M1. G2 is modified (N-acetylglycine; in Tyrosine--tRNA ligase, cytoplasmic, N-terminally processed). Y39 contributes to the L-tyrosine binding site. Residue Y39 participates in trans-resveratrol binding. Positions 44 to 52 match the 'HIGH' region motif; it reads TTGKPHVAY. 4 residues coordinate L-tyrosine: Y166, Q170, D173, and Q188. Residues Q170 and D173 each contribute to the trans-resveratrol site. K197 bears the N6-acetyllysine mark. S205 is modified (phosphoserine). An N6-acetyllysine modification is found at K206. Residues 222–226 carry the 'KMSKS' region motif; sequence KMSSS. Positions 242-247 match the Nuclear localization signal motif; sequence KKKLKK. Positions 339–363 are disordered; that stretch reads AAYPDPSKQKPPAKGPAKNSEPEEV. The 105-residue stretch at 364 to 468 folds into the tRNA-binding domain; it reads IPSRLDIRVG…AGSAPGERVF (105 aa). Phosphoserine is present on S386. 3 positions are modified to N6-acetyllysine: K474, K482, and K490.

The protein belongs to the class-I aminoacyl-tRNA synthetase family. In terms of assembly, homodimer. Interacts (when binding to resveratrol) with PARP1; interaction stimulates the poly-ADP-ribosyltransferase activity of PARP1.

The protein localises to the cytoplasm. Its subcellular location is the nucleus. The enzyme catalyses tRNA(Tyr) + L-tyrosine + ATP = L-tyrosyl-tRNA(Tyr) + AMP + diphosphate + H(+). With respect to regulation, resveratrol strongly inhibits the tyrosine--tRNA ligase activity. In terms of biological role, tyrosine--tRNA ligase that catalyzes the attachment of tyrosine to tRNA(Tyr) in a two-step reaction: tyrosine is first activated by ATP to form Tyr-AMP and then transferred to the acceptor end of tRNA(Tyr). Also acts as a positive regulator of poly-ADP-ribosylation in the nucleus, independently of its tyrosine--tRNA ligase activity. Activity is switched upon resveratrol-binding: resveratrol strongly inhibits the tyrosine--tRNA ligase activity and promotes relocalization to the nucleus, where YARS1 specifically stimulates the poly-ADP-ribosyltransferase activity of PARP1. This is Tyrosine--tRNA ligase, cytoplasmic (Yars1) from Mus musculus (Mouse).